The chain runs to 156 residues: Small ribosomal subunit protein uS7 (156 aa).

Belongs to the universal ribosomal protein uS7 family. Part of the 30S ribosomal subunit. Contacts proteins S9 and S11.

Functionally, one of the primary rRNA binding proteins, it binds directly to 16S rRNA where it nucleates assembly of the head domain of the 30S subunit. Is located at the subunit interface close to the decoding center, probably blocks exit of the E-site tRNA. This Mycobacterium sp. (strain JLS) protein is Small ribosomal subunit protein uS7.